We begin with the raw amino-acid sequence, 117 residues long: UPF0251 protein DehaBAV1_0135 (117 aa).

The protein belongs to the UPF0251 family.

In Dehalococcoides mccartyi (strain ATCC BAA-2100 / JCM 16839 / KCTC 5957 / BAV1), this protein is UPF0251 protein DehaBAV1_0135.